A 735-amino-acid polypeptide reads, in one-letter code: Serine/threonine-protein kinase BRSK2 (735 aa).

The Protein kinase domain maps to 20 to 271 (YRLEKTLGKG…LEHIQKHIWY (252 aa)). ATP-binding positions include 26-34 (LGKGQTGLV) and lysine 49. The Proton acceptor role is filled by aspartate 142. Threonine 175 carries the post-translational modification Phosphothreonine; by LKB1. Threonine 261 carries the phosphothreonine; by PKA modification. Residue serine 295 is modified to Phosphoserine. Residues 298-340 (DIDPDVLDSMHSLGCFRDRNKLLQDLLSEEENQEKMIYFLLLD) form the UBA domain. Residues 346–367 (PSHEDEDLPPRNEIDPPRKRVD) show a composition bias toward basic and acidic residues. 3 disordered regions span residues 346–476 (PSHE…GVPW), 493–514 (FHRR…PESS), and 682–735 (KNGQ…REQP). Residues serine 368, serine 383, serine 394, serine 413, alanine 417, serine 424, and serine 428 each carry the phosphoserine modification. Over residues 411-429 (SRSISGASSGLSTSPLSSP) the composition is skewed to low complexity. Residues 432–446 (TPHPSPRGSPLPTPK) show a composition bias toward pro residues. Phosphoserine is present on serine 456. Phosphothreonine is present on residues threonine 460, threonine 464, and threonine 510. Phosphoserine is present on residues serine 513 and serine 514.

It belongs to the protein kinase superfamily. CAMK Ser/Thr protein kinase family. SNF1 subfamily. In terms of assembly, interacts with FZR1, a regulatory subunit of the APC ubiquitin ligase complex. Interacts with COPS5. Interacts with PAK1. It depends on Mg(2+) as a cofactor. Post-translationally, may be phosphorylated at Thr-261 by PKA. Phosphorylated at Thr-175 by STK11/LKB1 in complex with STE20-related adapter-alpha (STRADA) pseudo kinase and CAB39. Not phosphorylated at Thr-175 by CaMKK2. In contrast, it is phosphorylated and activated by CaMKK1. May be inactivated via dephosphorylation of Thr-175 by PP2C. In terms of processing, polyubiquitinated by the APC complex in conjunction with FZR1, leading to its proteasomal degradation. Targeted for proteasomal degradation by interaction with COPS5. BRSK2 levels change during the cell cycle. BRSK2 levels are low at the G1/S boundary and gradually increase as cells progress into G2 phase. BRSK2 levels decrease rapidly at the end of mitosis.

It is found in the cytoplasm. The protein resides in the cytoskeleton. Its subcellular location is the microtubule organizing center. The protein localises to the centrosome. It localises to the perinuclear region. It is found in the endoplasmic reticulum. The catalysed reaction is L-seryl-[protein] + ATP = O-phospho-L-seryl-[protein] + ADP + H(+). The enzyme catalyses L-threonyl-[protein] + ATP = O-phospho-L-threonyl-[protein] + ADP + H(+). It catalyses the reaction L-seryl-[tau protein] + ATP = O-phospho-L-seryl-[tau protein] + ADP + H(+). It carries out the reaction L-threonyl-[tau protein] + ATP = O-phospho-L-threonyl-[tau protein] + ADP + H(+). Its activity is regulated as follows. Activated by phosphorylation on Thr-175 by STK11/LKB1. Serine/threonine-protein kinase that plays a key role in polarization of neurons and axonogenesis, cell cycle progress and insulin secretion. Phosphorylates CDK16, CDC25C, MAPT/TAU, PAK1 and WEE1. Following phosphorylation and activation by STK11/LKB1, acts as a key regulator of polarization of cortical neurons, probably by mediating phosphorylation of microtubule-associated proteins such as MAPT/TAU at 'Thr-523' and 'Ser-573'. Also regulates neuron polarization by mediating phosphorylation of WEE1 at 'Ser-642' in post-mitotic neurons, leading to down-regulate WEE1 activity in polarized neurons. Plays a role in the regulation of the mitotic cell cycle progress and the onset of mitosis. Plays a role in the regulation of insulin secretion in response to elevated glucose levels, probably via phosphorylation of CDK16 and PAK1. While BRSK2 phosphorylated at Thr-175 can inhibit insulin secretion, BRSK2 phosphorylated at Thr-261 can promote insulin secretion. Regulates reorganization of the actin cytoskeleton. May play a role in the apoptotic response triggered by endoplasmic reticulum (ER) stress. This Rattus norvegicus (Rat) protein is Serine/threonine-protein kinase BRSK2 (Brsk2).